Here is a 434-residue protein sequence, read N- to C-terminus: D-amino acid dehydrogenase (434 aa).

An FAD-binding site is contributed by 3-17 (VIILGGGVIGVTSAW).

The protein belongs to the DadA oxidoreductase family. FAD serves as cofactor.

The enzyme catalyses a D-alpha-amino acid + A + H2O = a 2-oxocarboxylate + AH2 + NH4(+). The protein operates within amino-acid degradation; D-alanine degradation; NH(3) and pyruvate from D-alanine: step 1/1. Oxidative deamination of D-amino acids. This is D-amino acid dehydrogenase from Proteus mirabilis (strain HI4320).